The following is a 433-amino-acid chain: MFVDQVKIYVKGGDGGNGMVAFRREKYVPKGGPAGGDGGKGGDVVFVVDEGLRTLMDFRYQRHFKAPRGENGMSKNQHGKNAEDLLVKVPPGTVVIDADTNEVLADLTEQGQRFVVAKGGRGGRGNTRFATAANPAPEIAENGEPGEERNVILELKLLADVGLVGFPSVGKSTLLSVVSAARPKIAEYHFTTLVPNLGVVETEDGRSFVMADLPGLIEGAHEGVGLGHQFLRHIERTRVIVHVIDMAAVEGRDPYDDYVVINEELKQYNLRLTERPQIVAANKMDMPNAEENLRRFKEKVGEAVPVFPISAATRQGVRELLFAIADLLETTPEFPLHELEEPAVQRVVYKYEKEELPFTITRGSDGAFILSGEKIEKLFKMTDFSREESVRRFARQLRAMGVDDALRERGAKDGDTVRLLDYEFEFVDDWDER.

The Obg domain occupies 1-158 (MFVDQVKIYV…RNVILELKLL (158 aa)). The OBG-type G domain maps to 159–329 (ADVGLVGFPS…LLFAIADLLE (171 aa)). GTP is bound by residues 165–172 (GFPSVGKS), 190–194 (FTTLV), 212–215 (DLPG), 282–285 (NKMD), and 310–312 (SAA). Residues Ser-172 and Thr-192 each coordinate Mg(2+). The OCT domain occupies 350–428 (KYEKEELPFT…LLDYEFEFVD (79 aa)).

This sequence belongs to the TRAFAC class OBG-HflX-like GTPase superfamily. OBG GTPase family. Monomer. Requires Mg(2+) as cofactor.

Its subcellular location is the cytoplasm. An essential GTPase which binds GTP, GDP and possibly (p)ppGpp with moderate affinity, with high nucleotide exchange rates and a fairly low GTP hydrolysis rate. Plays a role in control of the cell cycle, stress response, ribosome biogenesis and in those bacteria that undergo differentiation, in morphogenesis control. The polypeptide is GTPase Obg (Geobacillus thermodenitrificans (strain NG80-2)).